We begin with the raw amino-acid sequence, 234 residues long: UPF0441 protein plu3956 (234 aa).

2 disordered regions span residues 105 to 129 (QAGL…QQSG) and 149 to 234 (SAPS…SVGG). Residues 110–127 (TTTSSTSTNGEAQAQQQQ) are compositionally biased toward low complexity. A compositionally biased stretch (polar residues) spans 150–175 (APSQPLFSSKSATSPANGQFVDSTGK). Low complexity-rich tracts occupy residues 188–205 (TVPK…TTIT) and 216–234 (QSTM…SVGG).

Belongs to the UPF0441 family.

This chain is UPF0441 protein plu3956, found in Photorhabdus laumondii subsp. laumondii (strain DSM 15139 / CIP 105565 / TT01) (Photorhabdus luminescens subsp. laumondii).